The sequence spans 113 residues: MDPEEIKQKKLQEMQAKAQDPEYQRQMQEQQMQYEMQKQKVLRQILSEEARSRLARIKLAKPEFARQVESQLIQLAQAGRLPVPLTDEYFKGLLDKIYEMNKSTKREVTITRR.

Positions 1-12 are enriched in basic and acidic residues; it reads MDPEEIKQKKLQ. The interval 1-22 is disordered; it reads MDPEEIKQKKLQEMQAKAQDPE.

Belongs to the PDCD5 family.

This chain is DNA-binding protein Mevan_1162, found in Methanococcus vannielii (strain ATCC 35089 / DSM 1224 / JCM 13029 / OCM 148 / SB).